Consider the following 232-residue polypeptide: RNA chaperone ProQ (232 aa).

The interval 105–182 (EAKARVQAQR…REEQHTPVSD (78 aa)) is disordered. Basic and acidic residues predominate over residues 117 to 136 (QQAKKREAAAAAGEKEDAPR). The segment covering 137 to 146 (RERKPRPTTP) has biased composition (basic residues). The segment covering 147 to 177 (RRKEGAERKPRAQKPVEKAPKTAKAPREEQH) has biased composition (basic and acidic residues).

This sequence belongs to the ProQ family.

It localises to the cytoplasm. Its function is as follows. RNA chaperone with significant RNA binding, RNA strand exchange and RNA duplexing activities. May regulate ProP activity through an RNA-based, post-transcriptional mechanism. The chain is RNA chaperone ProQ from Shigella dysenteriae serotype 1 (strain Sd197).